Reading from the N-terminus, the 89-residue chain is Small ribosomal subunit protein uS15 (89 aa).

This sequence belongs to the universal ribosomal protein uS15 family. Part of the 30S ribosomal subunit. Forms a bridge to the 50S subunit in the 70S ribosome, contacting the 23S rRNA.

One of the primary rRNA binding proteins, it binds directly to 16S rRNA where it helps nucleate assembly of the platform of the 30S subunit by binding and bridging several RNA helices of the 16S rRNA. In terms of biological role, forms an intersubunit bridge (bridge B4) with the 23S rRNA of the 50S subunit in the ribosome. In Acidothermus cellulolyticus (strain ATCC 43068 / DSM 8971 / 11B), this protein is Small ribosomal subunit protein uS15.